A 281-amino-acid chain; its full sequence is Energy-coupling factor transporter ATP-binding protein EcfA2 (281 aa).

The ABC transporter domain occupies 3–242; that stretch reads IKVTGLTYVY…TETLEEIGLA (240 aa). 40 to 47 contributes to the ATP binding site; that stretch reads GHTGSGKS.

This sequence belongs to the ABC transporter superfamily. Energy-coupling factor EcfA family. Forms a stable energy-coupling factor (ECF) transporter complex composed of 2 membrane-embedded substrate-binding proteins (S component), 2 ATP-binding proteins (A component) and 2 transmembrane proteins (T component).

The protein resides in the cell membrane. Functionally, ATP-binding (A) component of a common energy-coupling factor (ECF) ABC-transporter complex. Unlike classic ABC transporters this ECF transporter provides the energy necessary to transport a number of different substrates. The sequence is that of Energy-coupling factor transporter ATP-binding protein EcfA2 from Acetivibrio thermocellus (strain ATCC 27405 / DSM 1237 / JCM 9322 / NBRC 103400 / NCIMB 10682 / NRRL B-4536 / VPI 7372) (Clostridium thermocellum).